The chain runs to 143 residues: Protein Wnt-1 (143 aa).

S1 is lipidated: O-palmitoleoyl serine; by PORCN. Residues 38–81 (EGVRGNSNRGDRGDRRDRGDRSDNGGTEANFQPYNSNHKPPGPR) are disordered. Positions 46-60 (RGDRGDRRDRGDRSD) are enriched in basic and acidic residues. Over residues 64–75 (TEANFQPYNSNH) the composition is skewed to polar residues. C109 and C124 are disulfide-bonded. N-linked (GlcNAc...) asparagine glycans are attached at residues N110 and N111.

The protein belongs to the Wnt family. Palmitoleoylation is required for efficient binding to frizzled receptors. Palmitoleoylation is necessary for proper trafficking to cell surface. Depalmitoleoylated by NOTUM, leading to inhibit Wnt signaling pathway.

It is found in the secreted. It localises to the extracellular space. Its subcellular location is the extracellular matrix. In terms of biological role, ligand for members of the frizzled family of seven transmembrane receptors. Probable developmental protein. The chain is Protein Wnt-1 (WNT-1) from Evasterias troschelii (Mottled sea star).